We begin with the raw amino-acid sequence, 168 residues long: Small ribosomal subunit protein uS5 (168 aa).

Residues 13–76 (LEENVVAINR…EDAKRKLITV (64 aa)) enclose the S5 DRBM domain.

The protein belongs to the universal ribosomal protein uS5 family. As to quaternary structure, part of the 30S ribosomal subunit. Contacts proteins S4 and S8.

Its function is as follows. With S4 and S12 plays an important role in translational accuracy. In terms of biological role, located at the back of the 30S subunit body where it stabilizes the conformation of the head with respect to the body. The chain is Small ribosomal subunit protein uS5 from Leuconostoc mesenteroides subsp. mesenteroides (strain ATCC 8293 / DSM 20343 / BCRC 11652 / CCM 1803 / JCM 6124 / NCDO 523 / NBRC 100496 / NCIMB 8023 / NCTC 12954 / NRRL B-1118 / 37Y).